The primary structure comprises 403 residues: S-adenosylmethionine synthase (403 aa).

ATP is bound at residue H16. D18 is a Mg(2+) binding site. Residue E44 participates in K(+) binding. Residues E57 and Q100 each contribute to the L-methionine site. Residues Q100–R110 are flexible loop. Residues Q106–L126 are disordered. ATP-binding positions include D176–K178, K248–F249, D257, R263–K264, A280, and K284. D257 is a binding site for L-methionine. K288 lines the L-methionine pocket.

Belongs to the AdoMet synthase family. As to quaternary structure, homotetramer; dimer of dimers. Mg(2+) is required as a cofactor. The cofactor is K(+).

Its subcellular location is the cytoplasm. It carries out the reaction L-methionine + ATP + H2O = S-adenosyl-L-methionine + phosphate + diphosphate. It participates in amino-acid biosynthesis; S-adenosyl-L-methionine biosynthesis; S-adenosyl-L-methionine from L-methionine: step 1/1. Functionally, catalyzes the formation of S-adenosylmethionine (AdoMet) from methionine and ATP. The overall synthetic reaction is composed of two sequential steps, AdoMet formation and the subsequent tripolyphosphate hydrolysis which occurs prior to release of AdoMet from the enzyme. The sequence is that of S-adenosylmethionine synthase from Clavibacter michiganensis subsp. michiganensis (strain NCPPB 382).